We begin with the raw amino-acid sequence, 259 residues long: MIQIDALPAFSDNYIWLLQDTANRRCAVVDPGDDAPVLAWLGKHPGWVLEAILVTHHHHDHVGGVEALKHATGAQVFGPANERIPARDIALEDGAQVHVLGLAFDVLAMPGHTLGHIAYYTAQSPTPLLFSGDTLFAAGCGRLFEGTPEQMHHSLQRLAALPEQTQVYCAHEYTLSNLRFARAVEPHSEPVQQRFEAVTQLRADNRISLPSTIGIERQTNPFLRTAEISVKQKADEWKGHSNPTQASVFAALRSWKDVF.

Residues His56, His58, Asp60, His61, His112, Asp133, and His171 each coordinate Zn(2+).

The protein belongs to the metallo-beta-lactamase superfamily. Glyoxalase II family. As to quaternary structure, monomer. The cofactor is Zn(2+).

It carries out the reaction an S-(2-hydroxyacyl)glutathione + H2O = a 2-hydroxy carboxylate + glutathione + H(+). Its pathway is secondary metabolite metabolism; methylglyoxal degradation; (R)-lactate from methylglyoxal: step 2/2. Functionally, thiolesterase that catalyzes the hydrolysis of S-D-lactoyl-glutathione to form glutathione and D-lactic acid. The polypeptide is Hydroxyacylglutathione hydrolase (Pseudomonas entomophila (strain L48)).